The chain runs to 158 residues: UPF0225 protein PSEEN1229 (158 aa).

It belongs to the UPF0225 family.

This chain is UPF0225 protein PSEEN1229, found in Pseudomonas entomophila (strain L48).